We begin with the raw amino-acid sequence, 293 residues long: Formamidopyrimidine-DNA glycosylase (293 aa).

The active-site Schiff-base intermediate with DNA is proline 2. The active-site Proton donor is the glutamate 3. Residue lysine 58 is the Proton donor; for beta-elimination activity of the active site. Residues histidine 104, arginine 123, and arginine 166 each coordinate DNA. An FPG-type zinc finger spans residues 257-293 (AVYDREGEPCRSKGCDGVVKRFVQNGRSTFWCPKCQK). Arginine 283 serves as the catalytic Proton donor; for delta-elimination activity.

The protein belongs to the FPG family. As to quaternary structure, monomer. The cofactor is Zn(2+).

It carries out the reaction Hydrolysis of DNA containing ring-opened 7-methylguanine residues, releasing 2,6-diamino-4-hydroxy-5-(N-methyl)formamidopyrimidine.. The catalysed reaction is 2'-deoxyribonucleotide-(2'-deoxyribose 5'-phosphate)-2'-deoxyribonucleotide-DNA = a 3'-end 2'-deoxyribonucleotide-(2,3-dehydro-2,3-deoxyribose 5'-phosphate)-DNA + a 5'-end 5'-phospho-2'-deoxyribonucleoside-DNA + H(+). In terms of biological role, involved in base excision repair of DNA damaged by oxidation or by mutagenic agents. Acts as a DNA glycosylase that recognizes and removes damaged bases. Has a preference for oxidized purines, such as 7,8-dihydro-8-oxoguanine (8-oxoG). Has AP (apurinic/apyrimidinic) lyase activity and introduces nicks in the DNA strand. Cleaves the DNA backbone by beta-delta elimination to generate a single-strand break at the site of the removed base with both 3'- and 5'-phosphates. In Rhodopseudomonas palustris (strain BisB18), this protein is Formamidopyrimidine-DNA glycosylase.